A 96-amino-acid polypeptide reads, in one-letter code: Large ribosomal subunit protein uL23 (96 aa).

This sequence belongs to the universal ribosomal protein uL23 family. Part of the 50S ribosomal subunit. Contacts protein L29, and trigger factor when it is bound to the ribosome.

Its function is as follows. One of the early assembly proteins it binds 23S rRNA. One of the proteins that surrounds the polypeptide exit tunnel on the outside of the ribosome. Forms the main docking site for trigger factor binding to the ribosome. This Ruthia magnifica subsp. Calyptogena magnifica protein is Large ribosomal subunit protein uL23.